The primary structure comprises 446 residues: Kynurenine 3-monooxygenase (446 aa).

Belongs to the aromatic-ring hydroxylase family. KMO subfamily. FAD is required as a cofactor.

The catalysed reaction is L-kynurenine + NADPH + O2 + H(+) = 3-hydroxy-L-kynurenine + NADP(+) + H2O. It participates in cofactor biosynthesis; NAD(+) biosynthesis; quinolinate from L-kynurenine: step 1/3. In terms of biological role, catalyzes the hydroxylation of L-kynurenine (L-Kyn) to form 3-hydroxy-L-kynurenine (L-3OHKyn). Required for synthesis of quinolinic acid. This Flavobacterium johnsoniae (strain ATCC 17061 / DSM 2064 / JCM 8514 / BCRC 14874 / CCUG 350202 / NBRC 14942 / NCIMB 11054 / UW101) (Cytophaga johnsonae) protein is Kynurenine 3-monooxygenase.